The primary structure comprises 2130 residues: Bromodomain adjacent to zinc finger domain protein 2B (2130 aa).

Disordered stretches follow at residues 1–42 (MESG…TGAA), 82–118 (LFAPPAQNHDSTPFHPRTTGKNNRGSLEKGINGSLNG), 151–293 (GGRK…QKQP), 491–518 (KTTGNRTLVVPSTSPVLPGSGKDKPVSN), 543–633 (VDSD…SSIG), 756–790 (EGRRGRPPNPDRQHSREESRMRRRKGRPPNVGSTE), and 944–966 (RKKAEEKERLKQEKRDEKRLNKE). A compositionally biased stretch (low complexity) spans 8–33 (TSSSVSSTAAASSPVSSTPSVASAVS). The span at 183-206 (ESSSNSDSDSGSSSDTSSEGISSS) shows a compositional bias: low complexity. Positions 207-234 (DSDDLEEDEEEEEDQSAEESEDDESDSE) are enriched in acidic residues. The segment covering 250–270 (GVKDMKTDGQKAHEKSQEKRT) has biased composition (basic and acidic residues). Residues 272–283 (QQIPLVSDSQTH) are compositionally biased toward polar residues. A compositionally biased stretch (low complexity) spans 284 to 293 (SSFQSQQKQP). Residues 492-505 (TTGNRTLVVPSTSP) show a composition bias toward polar residues. Residues 543–554 (VDSDAPSSKESD) show a composition bias toward basic and acidic residues. A compositionally biased stretch (acidic residues) spans 555–611 (DSNDDDDDDEDEDEDDEDDDSDDSQSESDSNSESDTDGSEDEDDEDDKDQDESDTDT). The span at 623–633 (TGSSIKSSSIG) shows a compositional bias: low complexity. Positions 687-762 (VTDERELRVP…RAMEGRRGRP (76 aa)) constitute an MBD domain. Residues 756 to 775 (EGRRGRPPNPDRQHSREESR) show a composition bias toward basic and acidic residues. A coiled-coil region spans residues 797–984 (AKLLRKLQAQ…ELEMAKELKK (188 aa)). A DDT domain is found at 1010–1075 (GSTFSDCLMI…VTAAVCDPGL (66 aa)). Disordered regions lie at residues 1186–1265 (TGKR…DQTV), 1431–1454 (SLCSLQPSVSQSSSEKSDSSNLFS), 1499–1545 (VTHV…PFAM), and 1773–1795 (HKKHDGDSAGGGEGSTSSLERKN). Residues 1220 to 1244 (SDYDDDDDDDSDDQADEDDEDEEDK) show a composition bias toward acidic residues. The segment covering 1245–1254 (EDKKGKKAEV) has biased composition (basic and acidic residues). Residues 1514-1526 (SHPPSKSPSPVPS) are compositionally biased toward pro residues. Residues 1895–1945 (KVYCQICRKGDNEELLLLCDGCDKGCHTYCHRPKITTIPDGDWFCPACIAK) form a PHD-type zinc finger. The disordered stretch occupies residues 1957–2019 (QIKGKKSNEQ…KQENFTAIKK (63 aa)). A compositionally biased stretch (basic and acidic residues) spans 1991–2002 (GKTEPKKRKMDE). Over residues 2004-2014 (VSVSQGKQENF) the composition is skewed to polar residues. The Bromo domain maps to 2022–2126 (RDDSKDLAIC…KYFEKKWTEI (105 aa)).

Belongs to the WAL family.

Its subcellular location is the nucleus. Functionally, regulatory subunit of the ATP-dependent BRF-1 and BRF-5 ISWI chromatin remodeling complexes, which form ordered nucleosome arrays on chromatin and facilitate access to DNA during DNA-templated processes such as DNA replication, transcription, and repair. Both complexes regulate the spacing of nucleosomes along the chromatin and have the ability to slide mononucleosomes to the center of a DNA template. The BRF-1 ISWI chromatin remodeling complex has a lower ATP hydrolysis rate than the BRF-5 ISWI chromatin remodeling complex. Chromatin reader protein. Represses the expression of mitochondrial function-related genes, perhaps by transcriptional regulation. The polypeptide is Bromodomain adjacent to zinc finger domain protein 2B (BAZ2B) (Gallus gallus (Chicken)).